Here is a 336-residue protein sequence, read N- to C-terminus: Holliday junction branch migration complex subunit RuvB (336 aa).

A large ATPase domain (RuvB-L) region spans residues 1 to 182 (MKERIVNLET…FGMSFRMQFY (182 aa)). ATP-binding positions include Leu21, Arg22, Gly63, Lys66, Thr67, Ser68, 129-131 (EDF), Arg172, Tyr182, and Arg219. Thr67 is a Mg(2+) binding site. Residues 183–253 (SPSELALIIK…ITLHALNELG (71 aa)) form a small ATPAse domain (RuvB-S) region. A head domain (RuvB-H) region spans residues 256–336 (ELGFDEADLA…IPTLNPQTLF (81 aa)). Residues Arg310 and Arg315 each contribute to the DNA site.

Belongs to the RuvB family. As to quaternary structure, homohexamer. Forms an RuvA(8)-RuvB(12)-Holliday junction (HJ) complex. HJ DNA is sandwiched between 2 RuvA tetramers; dsDNA enters through RuvA and exits via RuvB. An RuvB hexamer assembles on each DNA strand where it exits the tetramer. Each RuvB hexamer is contacted by two RuvA subunits (via domain III) on 2 adjacent RuvB subunits; this complex drives branch migration. In the full resolvosome a probable DNA-RuvA(4)-RuvB(12)-RuvC(2) complex forms which resolves the HJ.

Its subcellular location is the cytoplasm. The enzyme catalyses ATP + H2O = ADP + phosphate + H(+). Its function is as follows. The RuvA-RuvB-RuvC complex processes Holliday junction (HJ) DNA during genetic recombination and DNA repair, while the RuvA-RuvB complex plays an important role in the rescue of blocked DNA replication forks via replication fork reversal (RFR). RuvA specifically binds to HJ cruciform DNA, conferring on it an open structure. The RuvB hexamer acts as an ATP-dependent pump, pulling dsDNA into and through the RuvAB complex. RuvB forms 2 homohexamers on either side of HJ DNA bound by 1 or 2 RuvA tetramers; 4 subunits per hexamer contact DNA at a time. Coordinated motions by a converter formed by DNA-disengaged RuvB subunits stimulates ATP hydrolysis and nucleotide exchange. Immobilization of the converter enables RuvB to convert the ATP-contained energy into a lever motion, pulling 2 nucleotides of DNA out of the RuvA tetramer per ATP hydrolyzed, thus driving DNA branch migration. The RuvB motors rotate together with the DNA substrate, which together with the progressing nucleotide cycle form the mechanistic basis for DNA recombination by continuous HJ branch migration. Branch migration allows RuvC to scan DNA until it finds its consensus sequence, where it cleaves and resolves cruciform DNA. The sequence is that of Holliday junction branch migration complex subunit RuvB from Helicobacter pylori (strain Shi470).